We begin with the raw amino-acid sequence, 116 residues long: Helper of Tim protein 13 (116 aa).

The segment at 10 to 94 (TVDDQSRCVH…SNLICPNCRS (85 aa)) adopts a CHY-type; degenerate zinc-finger fold. Residues C17, H19, C40, C43, C68, C71, C89, and C92 each coordinate Zn(2+).

In terms of assembly, interacts with the small Tim proteins TIM8, TIM9, TIM10, TIM12, and TIM13.

The protein localises to the mitochondrion intermembrane space. The protein resides in the mitochondrion membrane. Required for the assembly or recycling of the small Tim proteins in the mitochondrial intermembrane, thereby participating in the import and insertion of multi-pass transmembrane proteins into the mitochondrial inner membrane. Probably acts by facilitating the formation of disulfide bonds in small Tim proteins. This chain is Helper of Tim protein 13 (HOT13), found in Saccharomyces cerevisiae (strain ATCC 204508 / S288c) (Baker's yeast).